The primary structure comprises 205 residues: Spermatogenesis-associated protein 24 (205 aa).

The stretch at 17-166 (LAFDQLRDVI…QQRQSFRNHM (150 aa)) forms a coiled coil. The required for interaction with CBX5 and TBPL1 stretch occupies residues 138–185 (EDILNGKENEIKELQQVISQQRQSFRNHMSDFRIQKQQETYMAQVLDQ). A disordered region spans residues 182–205 (VLDQKHKKTSGTRRARSRQCSREK). Over residues 186–205 (KHKKTSGTRRARSRQCSREK) the composition is skewed to basic residues.

It belongs to the SPATA24 family. As to quaternary structure, homodimer. Interacts with CBX3, CBX5, GMNN, GTF2B, TBPL1 and the polycomb proteins PHCF2, RNF2 and SCMH1 but not with CBX1 or PCGF2. Highly expressed in the testis and is mainly localized in the spermatids. Also expressed in the lung, heart, spleen and epididymis.

It is found in the cytoplasm. Its subcellular location is the nucleus. It localises to the nucleolus. The protein resides in the nucleoplasm. Its function is as follows. Binds DNA with high affinity but does not bind to TATA boxes. Synergises with GMNN and TBP in activation of TATA box-containing promoters and with GMNN and TBPL1 in activation of the NF1 TATA-less promoter. May play a role in cytoplasm movement and removal during spermiogenesis. In Rattus norvegicus (Rat), this protein is Spermatogenesis-associated protein 24 (Spata24).